The sequence spans 166 residues: Interferon gamma (166 aa).

The N-terminal stretch at 1–23 (MKYTSYFLALLLCVLLGFSGSYG) is a signal peptide. Residue Gln24 is modified to Pyrrolidone carboxylic acid. 2 N-linked (GlcNAc...) asparagine glycosylation sites follow: Asn39 and Asn106.

It belongs to the type II (or gamma) interferon family. As to quaternary structure, homodimer. Interacts with IFNGR1 (via extracellular domain); this interaction promotes IFNGR1 dimerization. Released primarily from activated T lymphocytes.

Its subcellular location is the secreted. Its function is as follows. Type II interferon produced by immune cells such as T-cells and NK cells that plays crucial roles in antimicrobial, antiviral, and antitumor responses by activating effector immune cells and enhancing antigen presentation. Primarily signals through the JAK-STAT pathway after interaction with its receptor IFNGR1 to affect gene regulation. Upon IFNG binding, IFNGR1 intracellular domain opens out to allow association of downstream signaling components JAK2, JAK1 and STAT1, leading to STAT1 activation, nuclear translocation and transcription of IFNG-regulated genes. Many of the induced genes are transcription factors such as IRF1 that are able to further drive regulation of a next wave of transcription. Plays a role in class I antigen presentation pathway by inducing a replacement of catalytic proteasome subunits with immunoproteasome subunits. In turn, increases the quantity, quality, and repertoire of peptides for class I MHC loading. Increases the efficiency of peptide generation also by inducing the expression of activator PA28 that associates with the proteasome and alters its proteolytic cleavage preference. Up-regulates as well MHC II complexes on the cell surface by promoting expression of several key molecules such as cathepsins B/CTSB, H/CTSH, and L/CTSL. Participates in the regulation of hematopoietic stem cells during development and under homeostatic conditions by affecting their development, quiescence, and differentiation. The chain is Interferon gamma (IFNG) from Bubalus carabanensis (Swamp type water buffalo).